Reading from the N-terminus, the 172-residue chain is Large ribosomal subunit protein uL10 (172 aa).

This sequence belongs to the universal ribosomal protein uL10 family. Part of the ribosomal stalk of the 50S ribosomal subunit. The N-terminus interacts with L11 and the large rRNA to form the base of the stalk. The C-terminus forms an elongated spine to which L12 dimers bind in a sequential fashion forming a multimeric L10(L12)X complex.

In terms of biological role, forms part of the ribosomal stalk, playing a central role in the interaction of the ribosome with GTP-bound translation factors. The protein is Large ribosomal subunit protein uL10 of Nitrobacter winogradskyi (strain ATCC 25391 / DSM 10237 / CIP 104748 / NCIMB 11846 / Nb-255).